Consider the following 164-residue polypeptide: MEMTNAQRLILSNQYKMMTMLDPTNAERYRRLQTIIERGYGLQMRELDREFGELTEETCRTIIDIMEMYHALHVSWTNLKDTQAIDERRVTFLGFDAATEARYLGYVRFMVNIEGRYTHFDAGTHGFNAQTPMWEKYQRMLNVWHACPRQYHLSANEINQIINA.

The protein belongs to the UPF0304 family.

This Salmonella enteritidis PT4 (strain P125109) protein is UPF0304 protein YfbU.